A 152-amino-acid chain; its full sequence is Protein X (152 aa).

Residues 68-115 (PCALRFTSATWRCMETPMNSVTCLRKRTLGLRTAPPTVMEQYIKDCLF) are mitochondrial targeting sequence.

This sequence belongs to the orthohepadnavirus protein X family. May form homodimer. May interact with host CEBPA, CFLAR, CREB1, DDB1, E4F1, HBXIP, HSPD1/HSP60, NFKBIA, POLR2E and SMAD4. Interacts with host SMC5-SMC6 complex and induces its degradation. Interacts with host TRPC4AP; leading to prevent ubiquitination of TRPC4AP. Interacts with host PLSCR1; this interaction promotes ubiquitination and degradation of HBx and impairs HBx-mediated cell proliferation. In terms of processing, a fraction may be phosphorylated in insect cells and HepG2 cells, a human hepatoblastoma cell line. Phosphorylated in vitro by host protein kinase C or mitogen-activated protein kinase. N-acetylated in insect cells.

It is found in the host cytoplasm. It localises to the host nucleus. The protein localises to the host mitochondrion. In terms of biological role, multifunctional protein that plays a role in silencing host antiviral defenses and promoting viral transcription. Does not seem to be essential for HBV infection. May be directly involved in development of cirrhosis and liver cancer (hepatocellular carcinoma). Most of cytosolic activities involve modulation of cytosolic calcium. The effect on apoptosis is controversial depending on the cell types in which the studies have been conducted. May induce apoptosis by localizing in mitochondria and causing loss of mitochondrial membrane potential. May also modulate apoptosis by binding host CFLAR, a key regulator of the death-inducing signaling complex (DISC). Promotes viral transcription by using the host E3 ubiquitin ligase DDB1 to target the SMC5-SMC6 complex to proteasomal degradation. This host complex would otherwise bind to viral episomal DNA, and prevents its transcription. Moderately stimulates transcription of many different viral and cellular transcription elements. Promoters and enhancers stimulated by HBx contain DNA binding sites for NF-kappa-B, AP-1, AP-2, c-EBP, ATF/CREB, or the calcium-activated factor NF-AT. This Lagothrix lagotricha (Brown woolly monkey) protein is Protein X.